Here is a 289-residue protein sequence, read N- to C-terminus: Diaminopimelate epimerase (289 aa).

Substrate is bound by residues Asn13, Gln47, and Asn67. Cys76 acts as the Proton donor in catalysis. Substrate contacts are provided by residues 77 to 78, Asn167, Asn200, and 218 to 219; these read GN and ER. Residue Cys227 is the Proton acceptor of the active site. 228-229 serves as a coordination point for substrate; the sequence is GT.

The protein belongs to the diaminopimelate epimerase family. As to quaternary structure, homodimer.

Its subcellular location is the cytoplasm. The catalysed reaction is (2S,6S)-2,6-diaminopimelate = meso-2,6-diaminopimelate. It participates in amino-acid biosynthesis; L-lysine biosynthesis via DAP pathway; DL-2,6-diaminopimelate from LL-2,6-diaminopimelate: step 1/1. Its function is as follows. Catalyzes the stereoinversion of LL-2,6-diaminopimelate (L,L-DAP) to meso-diaminopimelate (meso-DAP), a precursor of L-lysine and an essential component of the bacterial peptidoglycan. This chain is Diaminopimelate epimerase, found in Burkholderia thailandensis (strain ATCC 700388 / DSM 13276 / CCUG 48851 / CIP 106301 / E264).